Here is a 129-residue protein sequence, read N- to C-terminus: Small ribosomal subunit protein uS13m (129 aa).

The interval 92–129 is disordered; that stretch reads HQDGSPLRGQRTHTNARTARKQIRKGNERRLPKEQATD. Basic and acidic residues predominate over residues 116–129; sequence KGNERRLPKEQATD.

It belongs to the universal ribosomal protein uS13 family. Part of the small ribosomal subunit.

Its subcellular location is the mitochondrion. Functionally, located at the top of the head of the small subunit, it contacts several helices of the 18S rRNA. This is Small ribosomal subunit protein uS13m (RPS13) from Zea mays (Maize).